The primary structure comprises 262 residues: MRRTLYRLMIELTNGRFTSYILRKFAQSRLSSIIIPSYVKVFQINQDEMEKGLKEYRTLHELFTRKLKEGKRSIDTDASSIVSPVDGVFADYGPIEDAKTFDIKGKRYSIVDMLGNEERAQRYAGGTYMVIYLSPSHYHRIHSPLSGSVTERFVLGRKSYPVNAAGMEYGKEPLSKNYRSVTEVNSDGEHMALVKVGAMFVNSIELLHERDTVQKGEEMAYFTFGSTVVLLFEKDMIEVVQELKSGQELRLGEKIATRLAHK.

Catalysis depends on charge relay system; for autoendoproteolytic cleavage activity residues Asp-86, His-142, and Ser-226. Residue Ser-226 is the Schiff-base intermediate with substrate; via pyruvic acid; for decarboxylase activity of the active site. A Pyruvic acid (Ser); by autocatalysis modification is found at Ser-226.

The protein belongs to the phosphatidylserine decarboxylase family. PSD-B subfamily. Prokaryotic type I sub-subfamily. Heterodimer of a large membrane-associated beta subunit and a small pyruvoyl-containing alpha subunit. Pyruvate is required as a cofactor. In terms of processing, is synthesized initially as an inactive proenzyme. Formation of the active enzyme involves a self-maturation process in which the active site pyruvoyl group is generated from an internal serine residue via an autocatalytic post-translational modification. Two non-identical subunits are generated from the proenzyme in this reaction, and the pyruvate is formed at the N-terminus of the alpha chain, which is derived from the carboxyl end of the proenzyme. The autoendoproteolytic cleavage occurs by a canonical serine protease mechanism, in which the side chain hydroxyl group of the serine supplies its oxygen atom to form the C-terminus of the beta chain, while the remainder of the serine residue undergoes an oxidative deamination to produce ammonia and the pyruvoyl prosthetic group on the alpha chain. During this reaction, the Ser that is part of the protease active site of the proenzyme becomes the pyruvoyl prosthetic group, which constitutes an essential element of the active site of the mature decarboxylase.

It localises to the cell membrane. It carries out the reaction a 1,2-diacyl-sn-glycero-3-phospho-L-serine + H(+) = a 1,2-diacyl-sn-glycero-3-phosphoethanolamine + CO2. It functions in the pathway phospholipid metabolism; phosphatidylethanolamine biosynthesis; phosphatidylethanolamine from CDP-diacylglycerol: step 2/2. In terms of biological role, catalyzes the formation of phosphatidylethanolamine (PtdEtn) from phosphatidylserine (PtdSer). This chain is Phosphatidylserine decarboxylase proenzyme, found in Bacillus thuringiensis subsp. konkukian (strain 97-27).